The sequence spans 352 residues: Maleylacetate reductase (352 aa).

Belongs to the iron-containing alcohol dehydrogenase family.

The catalysed reaction is 3-oxoadipate + NAD(+) = maleylacetate + NADH + H(+). It catalyses the reaction 3-oxoadipate + NADP(+) = maleylacetate + NADPH + H(+). Its pathway is aromatic compound metabolism; 3-chlorocatechol degradation. This is Maleylacetate reductase (tcbF) from Pseudomonas sp. (strain P51).